Here is a 162-residue protein sequence, read N- to C-terminus: Novel acetylcholine receptor chaperone (162 aa).

Residues 1–5 are Cytoplasmic-facing; sequence MASPR. A helical transmembrane segment spans residues 6-26; it reads TVTIVALSVTLGLFFVFMGTI. Over 27–61 the chain is Lumenal; the sequence is KLTPRLSKDAYSEMKRAYKSYVKALPALKKIGISS. A helical transmembrane segment spans residues 62–82; sequence VFLRKAIGSLELACGIVLTLV. At 83–88 the chain is on the cytoplasmic side; the sequence is PGRPKD. The chain crosses the membrane as a helical span at residues 89–109; the sequence is VANFILLLLVLIVLFFHQLVG. The Lumenal segment spans residues 110-114; the sequence is DPLKR. A helical transmembrane segment spans residues 115-131; sequence YAHALVFGILLTCRLLV. Residues 132–162 are Cytoplasmic-facing; it reads SRQPEEEFPEKKLSRGNNGAHSREPIKMKVS. Residues 141 to 162 form a disordered region; that stretch reads EKKLSRGNNGAHSREPIKMKVS. Over residues 152–162 the composition is skewed to basic and acidic residues; it reads HSREPIKMKVS.

The protein belongs to the DoxX family.

It localises to the peroxisome membrane. The protein resides in the cytoplasmic vesicle. It is found in the endoplasmic reticulum membrane. Its function is as follows. Molecular chaperone which mediates the proper assembly and functional expression of the nicotinic acetylcholine receptors (nAChRs) throughout the brain. Essential for the proper folding, assembly, function and surface trafficking of alpha-7 (CHRNA7), alpha-4-beta-2, alpha-3-beta-2 and alpha-3-beta-4 receptors. This chain is Novel acetylcholine receptor chaperone (tmem35a), found in Xenopus tropicalis (Western clawed frog).